Here is a 368-residue protein sequence, read N- to C-terminus: MTDNSQIKVIVGMSGGVDSSVSAYLLQQQGYQVEGLFMKNWEEDDTDEYCSASQDLADAKAVCDKLGMKLHTINFAAEYWDNVFEHFLEEYKAGRTPNPDILCNKEIKFKAFLEFAAEELGATYIATGHYVRRDDSTGHPRLLRGLDSNKDQSYFLYTLSEKQVGQSLFPVGDLEKPEVRRIAEQLDLITAKKKDSTGICFIGERKFKDFLAKFLPAQPGPIETVDGKVIGEHQGLMYHTLGQRKGLGIGGRKDATEEAWYVVDKEVERNTLVVAQGEHPRLYSDGLIASQLHWVDRTPIRAPRRCTVKTRYRQQDIPCLIQPIDDETIRVIFDEKQAAVTPGQSAVFYDGEVCLGGGIIEQRFSHPV.

ATP is bound by residues 12–19 and Met-38; that span reads GMSGGVDS. The interaction with target base in tRNA stretch occupies residues 98–100; that stretch reads NPD. Cys-103 acts as the Nucleophile in catalysis. Cysteines 103 and 200 form a disulfide. Gly-128 is a binding site for ATP. The segment at 150-152 is interaction with tRNA; the sequence is KDQ. Cys-200 (cysteine persulfide intermediate) is an active-site residue. Residues 311-312 are interaction with tRNA; the sequence is RY.

The protein belongs to the MnmA/TRMU family.

It localises to the cytoplasm. The enzyme catalyses S-sulfanyl-L-cysteinyl-[protein] + uridine(34) in tRNA + AH2 + ATP = 2-thiouridine(34) in tRNA + L-cysteinyl-[protein] + A + AMP + diphosphate + H(+). Functionally, catalyzes the 2-thiolation of uridine at the wobble position (U34) of tRNA, leading to the formation of s(2)U34. The polypeptide is tRNA-specific 2-thiouridylase MnmA (Aeromonas salmonicida (strain A449)).